The chain runs to 333 residues: Beta-ketoacyl-[acyl-carrier-protein] synthase III (333 aa).

Active-site residues include cysteine 112 and histidine 255. An ACP-binding region spans residues 256–260 (QANQR). The active site involves asparagine 285.

Belongs to the thiolase-like superfamily. FabH family. Homodimer.

The protein localises to the cytoplasm. It catalyses the reaction malonyl-[ACP] + acetyl-CoA + H(+) = 3-oxobutanoyl-[ACP] + CO2 + CoA. The protein operates within lipid metabolism; fatty acid biosynthesis. In terms of biological role, catalyzes the condensation reaction of fatty acid synthesis by the addition to an acyl acceptor of two carbons from malonyl-ACP. Catalyzes the first condensation reaction which initiates fatty acid synthesis and may therefore play a role in governing the total rate of fatty acid production. Possesses both acetoacetyl-ACP synthase and acetyl transacylase activities. Its substrate specificity determines the biosynthesis of branched-chain and/or straight-chain of fatty acids. The sequence is that of Beta-ketoacyl-[acyl-carrier-protein] synthase III from Synechococcus sp. (strain RCC307).